The chain runs to 156 residues: MPRKGPVARRDVLPDPIYNSKLVTRLINRIMVDGKRGTAQTILYNAFELVKERSGNDPMEVFDQALKNIMPVLEVKARRVGGSNYQVPIEVKPERRTTLGLRWLVNYARLRGEKTMEERLANEILDAANNAGAAVKKREDTHKMAEANKAFAHYRW.

The protein belongs to the universal ribosomal protein uS7 family. In terms of assembly, part of the 30S ribosomal subunit. Contacts proteins S9 and S11.

One of the primary rRNA binding proteins, it binds directly to 16S rRNA where it nucleates assembly of the head domain of the 30S subunit. Is located at the subunit interface close to the decoding center, probably blocks exit of the E-site tRNA. In Shouchella clausii (strain KSM-K16) (Alkalihalobacillus clausii), this protein is Small ribosomal subunit protein uS7.